Consider the following 510-residue polypeptide: Flavonoid 3',5'-hydroxylase (510 aa).

Heme is bound at residue Cys447.

Belongs to the cytochrome P450 family. Heme serves as cofactor.

It catalyses the reaction a 3',5'-unsubstituted flavanone + 2 reduced [NADPH--hemoprotein reductase] + 2 O2 = a 3',5'-dihydroxyflavanone + 2 oxidized [NADPH--hemoprotein reductase] + 2 H2O + 2 H(+). It participates in pigment biosynthesis; anthocyanin biosynthesis. Functionally, catalyzes the 3'5'-hydroxylation of naringenin and eriodictyol to form 5,7,3,'4',5'-pentahydroxyflavanone and 3',5'-hydroxylation of dihydrokaempferol and dihydroquercetin to form dihydromyricetin. The sequence is that of Flavonoid 3',5'-hydroxylase (CYP75A5) from Eustoma exaltatum subsp. russellianum (Bluebells).